The sequence spans 692 residues: Elongation factor G (692 aa).

In terms of domain architecture, tr-type G spans 8-282; it reads AKTRNIGIMA…AVIDYLPSPL (275 aa). GTP is bound by residues 17–24, 81–85, and 135–138; these read AHVDAGKT, DTPGH, and NKMD.

Belongs to the TRAFAC class translation factor GTPase superfamily. Classic translation factor GTPase family. EF-G/EF-2 subfamily.

The protein resides in the cytoplasm. Functionally, catalyzes the GTP-dependent ribosomal translocation step during translation elongation. During this step, the ribosome changes from the pre-translocational (PRE) to the post-translocational (POST) state as the newly formed A-site-bound peptidyl-tRNA and P-site-bound deacylated tRNA move to the P and E sites, respectively. Catalyzes the coordinated movement of the two tRNA molecules, the mRNA and conformational changes in the ribosome. This is Elongation factor G from Streptococcus uberis (strain ATCC BAA-854 / 0140J).